Here is a 248-residue protein sequence, read N- to C-terminus: 1-(5-phosphoribosyl)-5-[(5-phosphoribosylamino)methylideneamino] imidazole-4-carboxamide isomerase (248 aa).

The Proton acceptor role is filled by aspartate 8. Residue aspartate 127 is the Proton donor of the active site.

The protein belongs to the HisA/HisF family.

It is found in the cytoplasm. The enzyme catalyses 1-(5-phospho-beta-D-ribosyl)-5-[(5-phospho-beta-D-ribosylamino)methylideneamino]imidazole-4-carboxamide = 5-[(5-phospho-1-deoxy-D-ribulos-1-ylimino)methylamino]-1-(5-phospho-beta-D-ribosyl)imidazole-4-carboxamide. It functions in the pathway amino-acid biosynthesis; L-histidine biosynthesis; L-histidine from 5-phospho-alpha-D-ribose 1-diphosphate: step 4/9. In Thermotoga neapolitana (strain ATCC 49049 / DSM 4359 / NBRC 107923 / NS-E), this protein is 1-(5-phosphoribosyl)-5-[(5-phosphoribosylamino)methylideneamino] imidazole-4-carboxamide isomerase.